Here is a 274-residue protein sequence, read N- to C-terminus: Dermonecrotic toxin SdSicTox-betaIIB2ii (274 aa).

Residue H5 is part of the active site. 2 residues coordinate Mg(2+): E25 and D27. Catalysis depends on H41, which acts as the Nucleophile. 2 disulfides stabilise this stretch: C45-C51 and C47-C190. A Mg(2+)-binding site is contributed by D85.

It belongs to the arthropod phospholipase D family. Class II subfamily. Mg(2+) is required as a cofactor. Expressed by the venom gland.

The protein resides in the secreted. The catalysed reaction is an N-(acyl)-sphingosylphosphocholine = an N-(acyl)-sphingosyl-1,3-cyclic phosphate + choline. The enzyme catalyses an N-(acyl)-sphingosylphosphoethanolamine = an N-(acyl)-sphingosyl-1,3-cyclic phosphate + ethanolamine. It carries out the reaction a 1-acyl-sn-glycero-3-phosphocholine = a 1-acyl-sn-glycero-2,3-cyclic phosphate + choline. It catalyses the reaction a 1-acyl-sn-glycero-3-phosphoethanolamine = a 1-acyl-sn-glycero-2,3-cyclic phosphate + ethanolamine. Functionally, dermonecrotic toxins cleave the phosphodiester linkage between the phosphate and headgroup of certain phospholipids (sphingolipid and lysolipid substrates), forming an alcohol (often choline) and a cyclic phosphate. This toxin acts on sphingomyelin (SM). It may also act on ceramide phosphoethanolamine (CPE), lysophosphatidylcholine (LPC) and lysophosphatidylethanolamine (LPE), but not on lysophosphatidylserine (LPS), and lysophosphatidylglycerol (LPG). It acts by transphosphatidylation, releasing exclusively cyclic phosphate products as second products. Induces dermonecrosis, hemolysis, increased vascular permeability, edema, inflammatory response, and platelet aggregation. This Sicarius cf. damarensis (strain GJB-2008) (Six-eyed sand spider) protein is Dermonecrotic toxin SdSicTox-betaIIB2ii.